The following is a 325-amino-acid chain: Cytochrome c1, heme protein, mitochondrial (325 aa).

A mitochondrion-targeting transit peptide spans 1–84 (MAAAAASLRG…AMALHSAVSA (84 aa)). Residues 85 to 281 (SDLELHPPSY…TFLRWASEPE (197 aa)) are Mitochondrial intermembrane-facing. In terms of domain architecture, Cytochrome c spans 108–209 (TSIRRGFQVY…IVRARHGGED (102 aa)). Residues C121, C124, and H125 each contribute to the heme c site. Residue S182 is modified to Phosphoserine. M244 is a heme c binding site. A helical transmembrane segment spans residues 282–315 (HDHRKRMGLKMLMMMALLVPLVYTIKRHKWSVLK). Topologically, residues 316–325 (SRKLAYRPPK) are mitochondrial matrix.

The protein belongs to the cytochrome c family. In terms of assembly, component of the ubiquinol-cytochrome c oxidoreductase (cytochrome b-c1 complex, complex III, CIII), a multisubunit enzyme composed of 11 subunits. The complex is composed of 3 respiratory subunits cytochrome b, cytochrome c1 and Rieske protein UQCRFS1, 2 core protein subunits UQCRC1/QCR1 and UQCRC2/QCR2, and 6 low-molecular weight protein subunits UQCRH/QCR6, UQCRB/QCR7, UQCRQ/QCR8, UQCR10/QCR9, UQCR11/QCR10 and subunit 9, the cleavage product of Rieske protein UQCRFS1. The complex exists as an obligatory dimer and forms supercomplexes (SCs) in the inner mitochondrial membrane with NADH-ubiquinone oxidoreductase (complex I, CI) and cytochrome c oxidase (complex IV, CIV), resulting in different assemblies (supercomplex SCI(1)III(2)IV(1) and megacomplex MCI(2)III(2)IV(2)). Interacts with FLVCR2; this interaction occurs in the absence of heme and is disrupted upon heme binding. The cofactor is heme c.

The protein resides in the mitochondrion inner membrane. It catalyses the reaction a quinol + 2 Fe(III)-[cytochrome c](out) = a quinone + 2 Fe(II)-[cytochrome c](out) + 2 H(+)(out). Functionally, component of the ubiquinol-cytochrome c oxidoreductase, a multisubunit transmembrane complex that is part of the mitochondrial electron transport chain which drives oxidative phosphorylation. The respiratory chain contains 3 multisubunit complexes succinate dehydrogenase (complex II, CII), ubiquinol-cytochrome c oxidoreductase (cytochrome b-c1 complex, complex III, CIII) and cytochrome c oxidase (complex IV, CIV), that cooperate to transfer electrons derived from NADH and succinate to molecular oxygen, creating an electrochemical gradient over the inner membrane that drives transmembrane transport and the ATP synthase. The cytochrome b-c1 complex catalyzes electron transfer from ubiquinol to cytochrome c, linking this redox reaction to translocation of protons across the mitochondrial inner membrane, with protons being carried across the membrane as hydrogens on the quinol. In the process called Q cycle, 2 protons are consumed from the matrix, 4 protons are released into the intermembrane space and 2 electrons are passed to cytochrome c. Cytochrome c1 is a catalytic core subunit containing a c-type heme. It transfers electrons from the [2Fe-2S] iron-sulfur cluster of the Rieske protein to cytochrome c. The protein is Cytochrome c1, heme protein, mitochondrial (CYC1) of Homo sapiens (Human).